A 668-amino-acid chain; its full sequence is ATP-dependent RNA helicase MSS116, mitochondrial (668 aa).

A mitochondrion-targeting transit peptide spans 1 to 38 (MLKQLSRSLGIRSSPIVANLIRSKQVCTRGFHISLVKQ). The Q motif signature appears at 87–115 (DFKGKGYIHDSIINSLHKNDFKELTPIQQ). Residues 119-300 (VPIFNTEKGL…KKHIHPEYEF (182 aa)) enclose the Helicase ATP-binding domain. 132–139 (AKTGTGKT) is a binding site for ATP. The DEAD box signature appears at 242–245 (DEAD). A Helicase C-terminal domain is found at 332–501 (SLSELHGIMK…NIIDQIESPL (170 aa)). The tract at residues 585–668 (YSDFSRSGMS…EHRRIRDHDE (84 aa)) is disordered. Positions 586–597 (SDFSRSGMSQRP) are enriched in polar residues. Over residues 609-636 (NGRGKYGNNRNNDWSYQNKNRYNNNNNR) the composition is skewed to low complexity. Residues 637–668 (QTERSYDSDRKSHNDWKYEKKFEHRRIRDHDE) show a composition bias toward basic and acidic residues.

It belongs to the DEAD box helicase family. DDX18/HAS1 subfamily.

The protein resides in the mitochondrion matrix. It carries out the reaction ATP + H2O = ADP + phosphate + H(+). In terms of biological role, ATP-dependent RNA helicase required for mitochondrial splicing of group I and II introns. Also required for efficient mitochondrial translation. The sequence is that of ATP-dependent RNA helicase MSS116, mitochondrial (MSS116) from Candida albicans (strain SC5314 / ATCC MYA-2876) (Yeast).